The following is a 557-amino-acid chain: Alpha-barbatene synthase (557 aa).

Arginine 273, aspartate 310, aspartate 314, arginine 451, and aspartate 454 together coordinate (2E,6E)-farnesyl diphosphate. Mg(2+) contacts are provided by aspartate 310 and aspartate 314. Residues 310 to 314 (DDACD) carry the DDXXD motif motif. Residues aspartate 454, aspartate 455, and aspartate 462 each contribute to the Mg(2+) site.

The protein belongs to the terpene synthase family. Tpsa subfamily. As to quaternary structure, monomer. The cofactor is Mg(2+). Mn(2+) is required as a cofactor. As to expression, expressed exclusively in flowers. Expressed in intrafloral nectaries and in the funiculus within the ovules.

The protein resides in the cytoplasm. The catalysed reaction is (2E,6E)-farnesyl diphosphate = (+)-alpha-barbatene + diphosphate. It catalyses the reaction (2E,6E)-farnesyl diphosphate = (+)-thujopsene + diphosphate. It carries out the reaction (2E,6E)-farnesyl diphosphate = (+)-beta-chamigrene + diphosphate. The enzyme catalyses (2E,6E)-farnesyl diphosphate = (+)-beta-barbatene + diphosphate. The catalysed reaction is (2E,6E)-farnesyl diphosphate = beta-sesquiphellandrene + diphosphate. It catalyses the reaction (2E,6E)-farnesyl diphosphate = (S)-beta-bisabolene + diphosphate. It carries out the reaction (2E,6E)-farnesyl diphosphate = (-)-alpha-cuprenene + diphosphate. The enzyme catalyses (2E,6E)-farnesyl diphosphate = alpha-zingiberene + diphosphate. The catalysed reaction is (2E,6E)-farnesyl diphosphate = beta-acoradiene + diphosphate. It catalyses the reaction (2E,6E)-farnesyl diphosphate = (E)-beta-farnesene + diphosphate. It functions in the pathway secondary metabolite biosynthesis; terpenoid biosynthesis. Its function is as follows. Involved in the biosynthesis of over 15 sesquiterpenes (C15). The major products are (+)-alpha-barbatene (27.3%), (+)-thujopsene (17.8%) and (+)-beta-chamigrene (9.9%). Can use farnesyl diphosphate or geranyl diphosphate as substrates, but not geranylgeranyl diphosphate. The polypeptide is Alpha-barbatene synthase (Arabidopsis thaliana (Mouse-ear cress)).